The sequence spans 225 residues: MDYRQLHRWDLPPEEAIKVQNELRKKIKLTPYEGEPEYVAGVDLSFPGKEEGLAVIVVLEYPSFKILEVVSERGEITFPYIPGLLAFREGPLFLKAWEKLRTKPDVVVFDGQGLAHPRKLGIASHMGLFIEIPTIGVAKSRLYGTFKMPEDKRCSWSYLYDGEEIIGCVIRTKEGSAPIFVSPGHLMDIESSKRLIKAFTLPGRRIPEPTRLAHIYTQRLKKGLF.

Mg(2+) contacts are provided by aspartate 43 and aspartate 110.

The protein belongs to the endonuclease V family. It depends on Mg(2+) as a cofactor.

The protein localises to the cytoplasm. It catalyses the reaction Endonucleolytic cleavage at apurinic or apyrimidinic sites to products with a 5'-phosphate.. In terms of biological role, DNA repair enzyme involved in the repair of deaminated bases. Selectively cleaves double-stranded DNA at the second phosphodiester bond 3' to a deoxyinosine leaving behind the intact lesion on the nicked DNA. The polypeptide is Endonuclease V (Thermotoga petrophila (strain ATCC BAA-488 / DSM 13995 / JCM 10881 / RKU-1)).